Consider the following 511-residue polypeptide: UDP-N-acetylhexosamine pyrophosphorylase-like protein 1 (511 aa).

Positions 1–19 (MDRSESAESAESRRRRAEE) are enriched in basic and acidic residues. The segment at 1–22 (MDRSESAESAESRRRRAEESGQ) is disordered. Residues 117–120 (LAGG) carry the Substrate binding motif. Residues 117-120 (LAGG), lysine 131, glutamine 205, and glycine 231 each bind UTP. Asparagine 232 is a substrate binding site. A UTP-binding site is contributed by aspartate 262. A Substrate binding motif is present at residues 312–313 (EY). Lysine 386 provides a ligand contact to UTP. Residue lysine 416 coordinates substrate.

The protein belongs to the UDPGP type 1 family.

This is UDP-N-acetylhexosamine pyrophosphorylase-like protein 1 (uap1l1) from Xenopus tropicalis (Western clawed frog).